The following is a 497-amino-acid chain: Probable cytosol aminopeptidase (497 aa).

Positions 265 and 270 each coordinate Mn(2+). Residue Lys-277 is part of the active site. Mn(2+) contacts are provided by Asp-288, Asp-347, and Glu-349. Arg-351 is an active-site residue.

This sequence belongs to the peptidase M17 family. Mn(2+) is required as a cofactor.

The protein resides in the cytoplasm. It catalyses the reaction Release of an N-terminal amino acid, Xaa-|-Yaa-, in which Xaa is preferably Leu, but may be other amino acids including Pro although not Arg or Lys, and Yaa may be Pro. Amino acid amides and methyl esters are also readily hydrolyzed, but rates on arylamides are exceedingly low.. The enzyme catalyses Release of an N-terminal amino acid, preferentially leucine, but not glutamic or aspartic acids.. Presumably involved in the processing and regular turnover of intracellular proteins. Catalyzes the removal of unsubstituted N-terminal amino acids from various peptides. This is Probable cytosol aminopeptidase from Geobacillus sp. (strain WCH70).